Consider the following 129-residue polypeptide: Large ribosomal subunit protein bL12 (129 aa).

Basic and acidic residues predominate over residues 95-123 (MVESTPKSIKEGVSKEDAEEAKKSLEDAG). Residues 95 to 129 (MVESTPKSIKEGVSKEDAEEAKKSLEDAGGKASLK) form a disordered region.

Belongs to the bacterial ribosomal protein bL12 family. In terms of assembly, homodimer. Part of the ribosomal stalk of the 50S ribosomal subunit. Forms a multimeric L10(L12)X complex, where L10 forms an elongated spine to which 2 to 4 L12 dimers bind in a sequential fashion. Binds GTP-bound translation factors.

Functionally, forms part of the ribosomal stalk which helps the ribosome interact with GTP-bound translation factors. Is thus essential for accurate translation. This Acaryochloris marina (strain MBIC 11017) protein is Large ribosomal subunit protein bL12.